The sequence spans 231 residues: uncharacterized protein (231 aa).

This sequence belongs to the DnaA family. HdA subfamily.

This is an uncharacterized protein from Haemophilus influenzae (strain ATCC 51907 / DSM 11121 / KW20 / Rd).